The following is a 347-amino-acid chain: FMRFamide-related peptides (347 aa).

The signal sequence occupies residues 1–22; the sequence is MGIALMFLLALYQMQSAIHSEI. Residues 23 to 102 constitute a propeptide that is removed on maturation; sequence IDTPNYAGNS…RYKYDPELEA (80 aa). Phenylalanine amide is present on Phe-114. Residue Tyr-146 is modified to Tyrosine amide. Residues Phe-157, Phe-168, Phe-179, Phe-190, Phe-201, Phe-212, Phe-223, and Phe-232 each carry the phenylalanine amide modification. The propeptide occupies 235-240; sequence SPHEEL. A phenylalanine amide mark is found at Phe-250 and Phe-259. Ser-270 bears the Serine amide mark. Phe-280 bears the Phenylalanine amide mark. Positions 283–347 are excised as a propeptide; that stretch reads SLKPAAPESK…SVEQDQFFGQ (65 aa). The disordered stretch occupies residues 283–347; sequence SLKPAAPESK…SVEQDQFFGQ (65 aa). Positions 305–320 are enriched in basic and acidic residues; the sequence is SPVDKAMTELFKKQEL. A compositionally biased stretch (polar residues) spans 321-347; it reads QDQQVKNGAQATTTQDGSVEQDQFFGQ.

The protein belongs to the FARP (FMRFamide related peptide) family. This precursor includes 13 peptides that have FMRF or related sequences at their C-termini, and other putative neuropeptides.

It localises to the secreted. Functionally, in insects, FMRFamide and related peptides have modulatory actions at skeletal neuromuscular junctions, and peptides that are immunologically related to FMRFamide are released into the circulation from neurohemal organs. The chain is FMRFamide-related peptides from Drosophila melanogaster (Fruit fly).